Reading from the N-terminus, the 168-residue chain is MKIKGKVWKFGDNIDTDAIIPARYLNTSDPKELAKHVMEDADSSFPSKVKPGDIIIAGRNFGCGSSREHAPIAIKASGIRAVIAKSYARIFFRNAFNIGLPIFEVPELIDETNEGDEVEIDMNSGQIINLTKGKKYNTKPIPPFMQELIKAGGLVEWTKKRLSMEDIK.

Belongs to the LeuD family. LeuD type 2 subfamily. As to quaternary structure, heterodimer of LeuC and LeuD.

It carries out the reaction (2R,3S)-3-isopropylmalate = (2S)-2-isopropylmalate. The protein operates within amino-acid biosynthesis; L-leucine biosynthesis; L-leucine from 3-methyl-2-oxobutanoate: step 2/4. Functionally, catalyzes the isomerization between 2-isopropylmalate and 3-isopropylmalate, via the formation of 2-isopropylmaleate. The sequence is that of 3-isopropylmalate dehydratase small subunit from Thermodesulfovibrio yellowstonii (strain ATCC 51303 / DSM 11347 / YP87).